The following is a 966-amino-acid chain: C4 phosphoenolpyruvate carboxylase (966 aa).

Ser11 carries the post-translational modification Phosphoserine. The active site involves His172. D-glucose 6-phosphate-binding residues include Trp283, Arg450, and Asp597. Lys600 is a catalytic residue. Arg635 lines the D-glucose 6-phosphate pocket. Residue Arg641 is part of the active site. Residue Arg641 coordinates L-aspartate. Position 665 (Thr665) interacts with D-glucose 6-phosphate. L-aspartate is bound at residue Gln673. D-glucose 6-phosphate contacts are provided by residues Arg753 and 767 to 769 (RAI). Positions 829, 888, and 964 each coordinate L-aspartate.

The protein belongs to the PEPCase type 1 family. In terms of assembly, homotetramer. The cofactor is Mg(2+). In terms of tissue distribution, expressed in mesophyll cells, but not in bundle-sheath, roots, stems and flowers.

The protein resides in the cytoplasm. The catalysed reaction is oxaloacetate + phosphate = phosphoenolpyruvate + hydrogencarbonate. It functions in the pathway photosynthesis; C4 acid pathway. Its activity is regulated as follows. 5 fold activation by the allosteric regulator glucose-6-phosphate. Low sensitivity to inhibition by L-malate and L-aspartate. Up-regulated by light-reversible phosphorylation. Its function is as follows. Forms oxaloacetate through the carboxylation of phosphoenolpyruvate (PEP). Catalyzes the first step of C4 photosynthesis. The polypeptide is C4 phosphoenolpyruvate carboxylase (Flaveria trinervia (Clustered yellowtops)).